The chain runs to 61 residues: MFGIGMPEMLIILVIILIIFGAGKLPEIGGAIGKGIKNFKKASNESEEIDENSRPKKIEPK.

A helical transmembrane segment spans residues 1 to 21; the sequence is MFGIGMPEMLIILVIILIIFG.

The protein belongs to the TatA/E family. As to quaternary structure, the Tat system comprises two distinct complexes: a TatABC complex, containing multiple copies of TatA, TatB and TatC subunits, and a separate TatA complex, containing only TatA subunits. Substrates initially bind to the TatABC complex, which probably triggers association of the separate TatA complex to form the active translocon.

The protein resides in the cell inner membrane. In terms of biological role, part of the twin-arginine translocation (Tat) system that transports large folded proteins containing a characteristic twin-arginine motif in their signal peptide across membranes. TatA could form the protein-conducting channel of the Tat system. In Syntrophus aciditrophicus (strain SB), this protein is Sec-independent protein translocase protein TatA.